A 159-amino-acid polypeptide reads, in one-letter code: ATP synthase subunit b (159 aa).

The chain crosses the membrane as a helical span at residues 2–22 (NISIPQIIAAILNFIILLLIV).

This sequence belongs to the ATPase B chain family. In terms of assembly, F-type ATPases have 2 components, F(1) - the catalytic core - and F(0) - the membrane proton channel. F(1) has five subunits: alpha(3), beta(3), gamma(1), delta(1), epsilon(1). F(0) has three main subunits: a(1), b(2) and c(10-14). The alpha and beta chains form an alternating ring which encloses part of the gamma chain. F(1) is attached to F(0) by a central stalk formed by the gamma and epsilon chains, while a peripheral stalk is formed by the delta and b chains.

Its subcellular location is the cell membrane. Functionally, f(1)F(0) ATP synthase produces ATP from ADP in the presence of a proton or sodium gradient. F-type ATPases consist of two structural domains, F(1) containing the extramembraneous catalytic core and F(0) containing the membrane proton channel, linked together by a central stalk and a peripheral stalk. During catalysis, ATP synthesis in the catalytic domain of F(1) is coupled via a rotary mechanism of the central stalk subunits to proton translocation. Component of the F(0) channel, it forms part of the peripheral stalk, linking F(1) to F(0). The sequence is that of ATP synthase subunit b from Clostridium botulinum (strain Okra / Type B1).